The sequence spans 465 residues: MKGVISQVMGPVVDVDFNDYLPKINEAIEVFFEVEGKKHKLILEVAAHLGDNRVRTIAMDMSEGLTRGLEAKALGAPISVPVGEKVLGRIFNVVGDLIDEGEGINFDKHWSIHRDPPPFEEQSTKSEIFETGIKVVDLLAPYAKGGKVGLFGGAGVGKTVIIMELIHNVAFKHSGYSVFAGVGERTREGNDLYHEMKESNVLDKVALCYGQMNEPPGARNRIALTGLTMAEYFRDEMGLDVLMFIDNIFRFSQSGAEMSALLGRIPSAVGYQPTLASEMGKFQERITSTKKGSITSVQAVYVPADDLTDPAPATVFAHLDATTVLNRSIAEKGIYPAVDPLDSTSRMLDPQILGADHYKVARGVQAVLQKYKDLQDIIAILGMDELSEEDKLTVDRARKIERFLSQPFFVAEVFTGSPGKYVSLDENIAGFKGILEGKYDHLPEAAFYMVGNIDEALAKAEKLKA.

152 to 159 provides a ligand contact to ATP; the sequence is GGAGVGKT.

The protein belongs to the ATPase alpha/beta chains family. F-type ATPases have 2 components, CF(1) - the catalytic core - and CF(0) - the membrane proton channel. CF(1) has five subunits: alpha(3), beta(3), gamma(1), delta(1), epsilon(1). CF(0) has three main subunits: a(1), b(2) and c(9-12). The alpha and beta chains form an alternating ring which encloses part of the gamma chain. CF(1) is attached to CF(0) by a central stalk formed by the gamma and epsilon chains, while a peripheral stalk is formed by the delta and b chains.

The protein resides in the cell inner membrane. It carries out the reaction ATP + H2O + 4 H(+)(in) = ADP + phosphate + 5 H(+)(out). In terms of biological role, produces ATP from ADP in the presence of a proton gradient across the membrane. The catalytic sites are hosted primarily by the beta subunits. The polypeptide is ATP synthase subunit beta (Campylobacter concisus (strain 13826)).